The sequence spans 625 residues: DNA mismatch repair protein MutL (625 aa).

Belongs to the DNA mismatch repair MutL/HexB family.

Its function is as follows. This protein is involved in the repair of mismatches in DNA. It is required for dam-dependent methyl-directed DNA mismatch repair. May act as a 'molecular matchmaker', a protein that promotes the formation of a stable complex between two or more DNA-binding proteins in an ATP-dependent manner without itself being part of a final effector complex. This is DNA mismatch repair protein MutL from Bacteroides fragilis (strain YCH46).